The chain runs to 458 residues: tRNA modification GTPase MnmE (458 aa).

(6S)-5-formyl-5,6,7,8-tetrahydrofolate contacts are provided by Arg26, Glu88, and Arg127. A TrmE-type G domain is found at 224 to 378 (GLSTAIIGRP…IEDRINQLFF (155 aa)). Asn234 is a binding site for K(+). Residues 234-239 (NVGKSS), 253-259 (TDIAGTT), and 278-281 (DTAG) each bind GTP. A Mg(2+)-binding site is contributed by Ser238. Thr253, Ile255, and Thr258 together coordinate K(+). Mg(2+) is bound at residue Thr259. Lys458 serves as a coordination point for (6S)-5-formyl-5,6,7,8-tetrahydrofolate.

The protein belongs to the TRAFAC class TrmE-Era-EngA-EngB-Septin-like GTPase superfamily. TrmE GTPase family. As to quaternary structure, homodimer. Heterotetramer of two MnmE and two MnmG subunits. It depends on K(+) as a cofactor.

It localises to the cytoplasm. In terms of biological role, exhibits a very high intrinsic GTPase hydrolysis rate. Involved in the addition of a carboxymethylaminomethyl (cmnm) group at the wobble position (U34) of certain tRNAs, forming tRNA-cmnm(5)s(2)U34. The chain is tRNA modification GTPase MnmE from Streptococcus pyogenes serotype M6 (strain ATCC BAA-946 / MGAS10394).